The following is a 251-amino-acid chain: Ubiquinone/menaquinone biosynthesis C-methyltransferase UbiE (251 aa).

Residues threonine 74, aspartate 95, 123 to 124, and serine 140 contribute to the S-adenosyl-L-methionine site; that span reads NA.

It belongs to the class I-like SAM-binding methyltransferase superfamily. MenG/UbiE family.

It catalyses the reaction a 2-demethylmenaquinol + S-adenosyl-L-methionine = a menaquinol + S-adenosyl-L-homocysteine + H(+). It carries out the reaction a 2-methoxy-6-(all-trans-polyprenyl)benzene-1,4-diol + S-adenosyl-L-methionine = a 5-methoxy-2-methyl-3-(all-trans-polyprenyl)benzene-1,4-diol + S-adenosyl-L-homocysteine + H(+). The protein operates within quinol/quinone metabolism; menaquinone biosynthesis; menaquinol from 1,4-dihydroxy-2-naphthoate: step 2/2. It functions in the pathway cofactor biosynthesis; ubiquinone biosynthesis. Its function is as follows. Methyltransferase required for the conversion of demethylmenaquinol (DMKH2) to menaquinol (MKH2) and the conversion of 2-polyprenyl-6-methoxy-1,4-benzoquinol (DDMQH2) to 2-polyprenyl-3-methyl-6-methoxy-1,4-benzoquinol (DMQH2). The protein is Ubiquinone/menaquinone biosynthesis C-methyltransferase UbiE of Escherichia fergusonii (strain ATCC 35469 / DSM 13698 / CCUG 18766 / IAM 14443 / JCM 21226 / LMG 7866 / NBRC 102419 / NCTC 12128 / CDC 0568-73).